A 100-amino-acid polypeptide reads, in one-letter code: uncharacterized protein (100 aa).

The signal sequence occupies residues 1-17 (MIMKYFCTVMIAIALVG). The N-palmitoyl cysteine moiety is linked to residue C18. The S-diacylglycerol cysteine moiety is linked to residue C18.

Its subcellular location is the cell membrane. This is an uncharacterized protein from Salmonella typhi.